Consider the following 565-residue polypeptide: Probable peptidoglycan D,D-transpeptidase PbpC (565 aa).

The chain crosses the membrane as a helical span at residues 10–30; it reads FILVVTLFVLASLAVSGRLVY. S289 acts as the Acyl-ester intermediate in catalysis.

This sequence belongs to the transpeptidase family. FtsI subfamily.

It is found in the cell inner membrane. The catalysed reaction is Preferential cleavage: (Ac)2-L-Lys-D-Ala-|-D-Ala. Also transpeptidation of peptidyl-alanyl moieties that are N-acyl substituents of D-alanine.. Its pathway is cell wall biogenesis; peptidoglycan biosynthesis. In terms of biological role, catalyzes cross-linking of the peptidoglycan cell wall at the division septum. Binds penicillin. This chain is Probable peptidoglycan D,D-transpeptidase PbpC, found in Pseudomonas aeruginosa (strain ATCC 15692 / DSM 22644 / CIP 104116 / JCM 14847 / LMG 12228 / 1C / PRS 101 / PAO1).